The sequence spans 184 residues: GTP cyclohydrolase 1 (184 aa).

Residues Cys75, His78, and Cys146 each coordinate Zn(2+).

The protein belongs to the GTP cyclohydrolase I family. In terms of assembly, homomer.

The catalysed reaction is GTP + H2O = 7,8-dihydroneopterin 3'-triphosphate + formate + H(+). The protein operates within cofactor biosynthesis; 7,8-dihydroneopterin triphosphate biosynthesis; 7,8-dihydroneopterin triphosphate from GTP: step 1/1. This chain is GTP cyclohydrolase 1, found in Finegoldia magna (strain ATCC 29328 / DSM 20472 / WAL 2508) (Peptostreptococcus magnus).